The primary structure comprises 302 residues: Glutaminase (302 aa).

The substrate site is built by Ser61, Asn111, Glu155, Asn162, Tyr186, Tyr238, and Val256.

Belongs to the glutaminase family. As to quaternary structure, homotetramer.

The enzyme catalyses L-glutamine + H2O = L-glutamate + NH4(+). In Ectopseudomonas mendocina (strain ymp) (Pseudomonas mendocina), this protein is Glutaminase.